Consider the following 134-residue polypeptide: Cystatin-1 (134 aa).

The first 17 residues, 1–17 (MKAIYLILTVLCGFSAS), serve as a signal peptide directing secretion. Residues 21–116 (GGWRDKDVDD…CTAIIWTRSW (96 aa)) enclose the Cystatin domain. The short motif at 65-69 (QVVSG) is the Secondary area of contact element. 2 cysteine pairs are disulfide-bonded: Cys-83–Cys-96 and Cys-107–Cys-127.

The protein belongs to the cystatin family. As to expression, expressed by the venom gland.

The protein resides in the secreted. Inhibits various C1 cysteine proteases. This protein has no toxic activity and its function in the venom is unknown. It may play a role as a housekeeping or regulatory protein. The polypeptide is Cystatin-1 (Chilobrachys guangxiensis (Chinese earth tiger tarantula)).